A 452-amino-acid chain; its full sequence is Phosphoglucosamine mutase (452 aa).

S108 acts as the Phosphoserine intermediate in catalysis. Mg(2+) is bound by residues S108, D247, D249, and D251. At S108 the chain carries Phosphoserine.

It belongs to the phosphohexose mutase family. The cofactor is Mg(2+). Activated by phosphorylation.

The catalysed reaction is alpha-D-glucosamine 1-phosphate = D-glucosamine 6-phosphate. Functionally, catalyzes the conversion of glucosamine-6-phosphate to glucosamine-1-phosphate. The sequence is that of Phosphoglucosamine mutase from Paraburkholderia xenovorans (strain LB400).